The primary structure comprises 431 residues: 5'-deoxyadenosine deaminase (431 aa).

The Zn(2+) site is built by His-65 and His-67. 2 residues coordinate substrate: Glu-94 and His-185. His-212 is a binding site for Zn(2+). Substrate is bound by residues Glu-215 and Asp-300. Asp-300 lines the Zn(2+) pocket.

Belongs to the metallo-dependent hydrolases superfamily. MTA/SAH deaminase family. In terms of assembly, homotetramer. The cofactor is Zn(2+).

The catalysed reaction is 5'-deoxyadenosine + H2O + H(+) = 5'-deoxyinosine + NH4(+). It catalyses the reaction S-adenosyl-L-homocysteine + H2O + H(+) = S-inosyl-L-homocysteine + NH4(+). The enzyme catalyses S-methyl-5'-thioadenosine + H2O + H(+) = S-methyl-5'-thioinosine + NH4(+). It carries out the reaction adenosine + H2O + H(+) = inosine + NH4(+). The protein operates within amino-acid biosynthesis; S-adenosyl-L-methionine biosynthesis. Catalyzes the deamination of three SAM-derived enzymatic products, namely 5'-deoxyadenosine, S-adenosyl-L-homocysteine, and 5'-methylthioadenosine, to produce the inosine analogs. Can also deaminate adenosine. The preferred substrate for this enzyme is 5'-deoxyadenosine, but all these substrates are efficiently deaminated. Likely functions in a S-adenosyl-L-methionine (SAM) recycling pathway from S-adenosyl-L-homocysteine (SAH) produced from SAM-dependent methylation reactions. May also be involved in the recycling of 5'-deoxyadenosine, whereupon the 5'-deoxyribose moiety of 5'-deoxyinosine is further metabolized to deoxyhexoses used for the biosynthesis of aromatic amino acids in methanogens. This Methanopyrus kandleri (strain AV19 / DSM 6324 / JCM 9639 / NBRC 100938) protein is 5'-deoxyadenosine deaminase.